The sequence spans 363 residues: Aminomethyltransferase (363 aa).

It belongs to the GcvT family. The glycine cleavage system is composed of four proteins: P, T, L and H.

The enzyme catalyses N(6)-[(R)-S(8)-aminomethyldihydrolipoyl]-L-lysyl-[protein] + (6S)-5,6,7,8-tetrahydrofolate = N(6)-[(R)-dihydrolipoyl]-L-lysyl-[protein] + (6R)-5,10-methylene-5,6,7,8-tetrahydrofolate + NH4(+). Functionally, the glycine cleavage system catalyzes the degradation of glycine. This Nitrosomonas eutropha (strain DSM 101675 / C91 / Nm57) protein is Aminomethyltransferase.